Here is a 99-residue protein sequence, read N- to C-terminus: MDIEIVSERENPLLKRREIVLKVIHGEGPTPTRKSVVERLAAIKDSKPGLVVVRKMNSLFGRRESIAHARIYESEERMRQVENPHIVKRNVFTEQKEAS.

This sequence belongs to the eukaryotic ribosomal protein eS24 family.

The protein is Small ribosomal subunit protein eS24 of Methanothrix thermoacetophila (strain DSM 6194 / JCM 14653 / NBRC 101360 / PT) (Methanosaeta thermophila).